An 862-amino-acid polypeptide reads, in one-letter code: Cell surface glycoprotein (862 aa).

The N-terminal stretch at 1 to 34 (MTDTQQKIKAVLLTVLMVTSVFAATIAFSGAAAA) is a signal peptide. Disordered stretches follow at residues 35–60 (SERG…SAGN), 101–126 (ILLE…EGTE), and 200–220 (VNTN…DRDD). Positions 43 to 57 (YTTGPTDGNQDNVDS) are enriched in polar residues. Over residues 206–220 (NDDHPNPAADGDRDD) the composition is skewed to basic and acidic residues. N-linked (GlcNAc...) asparagine glycans are attached at residues Asn-442, Asn-520, Asn-550, Asn-702, and Asn-761. The tract at residues 752–838 (LSDENVEPGN…TEEATTEATG (87 aa)) is disordered. Positions 784 to 801 (SLEEEQPATDTPEPDTDT) are enriched in acidic residues. Positions 802–815 (PEPATDTPEPATDT) are enriched in low complexity. Residues 816–833 (PEPDTDTPEPDTETEEAT) show a composition bias toward acidic residues. The helical transmembrane segment at 838–858 (GPGFTAAIALIALVAAALLAV) threads the bilayer. Positions 839-841 (PGF) match the PGF sorting signal motif.

The protein belongs to the halobacterial S-layer protein family. Post-translationally, glycosylated. In terms of processing, cleaved by the archaeosortase ArtA at the C-terminus, with removal of a short hydrophobic segment. Lipidation.

The protein localises to the secreted. It is found in the cell wall. Its subcellular location is the S-layer. It localises to the cell membrane. In terms of biological role, S-layer protein. The S-layer is a paracrystalline mono-layered assembly of proteins which coat the surface of the cell. The chain is Cell surface glycoprotein from Haloarcula japonica (strain ATCC 49778 / DSM 6131 / JCM 7785 / NBRC 101032 / NCIMB 13157 / TR-1).